The primary structure comprises 289 residues: 4-hydroxy-tetrahydrodipicolinate synthase (289 aa).

Thr43 is a pyruvate binding site. Tyr131 serves as the catalytic Proton donor/acceptor. Lys160 serves as the catalytic Schiff-base intermediate with substrate. Position 200 (Val200) interacts with pyruvate.

The protein belongs to the DapA family. In terms of assembly, homotetramer; dimer of dimers.

Its subcellular location is the cytoplasm. It catalyses the reaction L-aspartate 4-semialdehyde + pyruvate = (2S,4S)-4-hydroxy-2,3,4,5-tetrahydrodipicolinate + H2O + H(+). Its pathway is amino-acid biosynthesis; L-lysine biosynthesis via DAP pathway; (S)-tetrahydrodipicolinate from L-aspartate: step 3/4. In terms of biological role, catalyzes the condensation of (S)-aspartate-beta-semialdehyde [(S)-ASA] and pyruvate to 4-hydroxy-tetrahydrodipicolinate (HTPA). This is 4-hydroxy-tetrahydrodipicolinate synthase from Methanococcus maripaludis (strain C7 / ATCC BAA-1331).